A 138-amino-acid polypeptide reads, in one-letter code: Small ribosomal subunit protein uS12 (138 aa).

The tract at residues 33-55 (KEHTNVSSPQKRGVCTRVGTMTP) is disordered.

This sequence belongs to the universal ribosomal protein uS12 family. In terms of assembly, part of the 30S ribosomal subunit. Contacts proteins S8 and S17. May interact with IF1 in the 30S initiation complex. Interacts with BrxC.

Its function is as follows. With S4 and S5 plays an important role in translational accuracy. Functionally, interacts with and stabilizes bases of the 16S rRNA that are involved in tRNA selection in the A site and with the mRNA backbone. Located at the interface of the 30S and 50S subunits, it traverses the body of the 30S subunit contacting proteins on the other side and probably holding the rRNA structure together. The combined cluster of proteins S8, S12 and S17 appears to hold together the shoulder and platform of the 30S subunit. The sequence is that of Small ribosomal subunit protein uS12 (rpsL) from Bacillus subtilis (strain 168).